A 150-amino-acid chain; its full sequence is MKVTRHAKILEIINSNNIETQEELAEKLKNSGMNVTQATVSRDIKELKLIKVLSDNGRYKYATISRTESFLSNKLVNIFSQTVVSVENIDNFVVIKTISGSASAAAEAIDSLGFIGIAGTIAGDNTIFVMARDREKAHGITQKMKKMISQ.

Belongs to the ArgR family.

The protein localises to the cytoplasm. Its pathway is amino-acid biosynthesis; L-arginine biosynthesis [regulation]. Regulates arginine biosynthesis genes. In Clostridium kluyveri (strain NBRC 12016), this protein is Arginine repressor.